The following is a 220-amino-acid chain: ATP-dependent dethiobiotin synthetase BioD (220 aa).

ATP is bound at residue 13 to 18 (EVGKTV). Mg(2+) is bound at residue Thr17. Lys38 is a catalytic residue. Residue Ser42 participates in substrate binding. ATP-binding positions include Asp55, 116–119 (EGAG), 176–177 (NR), and Asn212. Mg(2+) contacts are provided by Asp55 and Glu116.

This sequence belongs to the dethiobiotin synthetase family. As to quaternary structure, homodimer. It depends on Mg(2+) as a cofactor.

It localises to the cytoplasm. The catalysed reaction is (7R,8S)-7,8-diammoniononanoate + CO2 + ATP = (4R,5S)-dethiobiotin + ADP + phosphate + 3 H(+). It participates in cofactor biosynthesis; biotin biosynthesis; biotin from 7,8-diaminononanoate: step 1/2. In terms of biological role, catalyzes a mechanistically unusual reaction, the ATP-dependent insertion of CO2 between the N7 and N8 nitrogen atoms of 7,8-diaminopelargonic acid (DAPA, also called 7,8-diammoniononanoate) to form a ureido ring. The protein is ATP-dependent dethiobiotin synthetase BioD of Photobacterium profundum (strain SS9).